Consider the following 600-residue polypeptide: NADH-quinone oxidoreductase subunit C/D (600 aa).

The segment at 1 to 190 (MIDLMPKKNT…EPFFLNEQKE (190 aa)) is NADH dehydrogenase I subunit C. The segment at 214 to 600 (EFMFLNLGPN…IDFVMSDVDR (387 aa)) is NADH dehydrogenase I subunit D.

It in the N-terminal section; belongs to the complex I 30 kDa subunit family. This sequence in the C-terminal section; belongs to the complex I 49 kDa subunit family. In terms of assembly, NDH-1 is composed of 13 different subunits. Subunits NuoB, CD, E, F, and G constitute the peripheral sector of the complex.

The protein resides in the cell membrane. It carries out the reaction a quinone + NADH + 5 H(+)(in) = a quinol + NAD(+) + 4 H(+)(out). Functionally, NDH-1 shuttles electrons from NADH, via FMN and iron-sulfur (Fe-S) centers, to quinones in the respiratory chain. The immediate electron acceptor for the enzyme in this species is believed to be ubiquinone. Couples the redox reaction to proton translocation (for every two electrons transferred, four hydrogen ions are translocated across the cytoplasmic membrane), and thus conserves the redox energy in a proton gradient. The polypeptide is NADH-quinone oxidoreductase subunit C/D (Buchnera aphidicola subsp. Acyrthosiphon pisum (strain Tuc7)).